A 568-amino-acid polypeptide reads, in one-letter code: Putative DEAD-box RNA helicase HEL64 (568 aa).

The disordered stretch occupies residues 1–34 (MEETYSPFTGRQGQYNQGYNGGGRRDSRGGMGER). Residues 23–34 (GRRDSRGGMGER) are compositionally biased toward basic and acidic residues. A Q motif motif is present at residues 102–130 (FDHLCGIVPPYLLKKLTAQNFTAPTPVQA). One can recognise a Helicase ATP-binding domain in the interval 133–307 (WPVLLSGRDL…AEFQKQWIRI (175 aa)). 146-153 (AKTGSGKT) is an ATP binding site. Positions 255–258 (DEAD) match the DEAD box motif. The 149-residue stretch at 335–483 (ELRKLMQEHR…EIPDWMIEWN (149 aa)) folds into the Helicase C-terminal domain.

It belongs to the DEAD box helicase family. DDX5/DBP2 subfamily.

Its subcellular location is the nucleus. It catalyses the reaction ATP + H2O = ADP + phosphate + H(+). In Trypanosoma brucei brucei, this protein is Putative DEAD-box RNA helicase HEL64 (HEL64).